Consider the following 320-residue polypeptide: Ferrochelatase (320 aa).

2 residues coordinate Fe cation: His-194 and Glu-275.

This sequence belongs to the ferrochelatase family.

It localises to the cytoplasm. It catalyses the reaction heme b + 2 H(+) = protoporphyrin IX + Fe(2+). The protein operates within porphyrin-containing compound metabolism; protoheme biosynthesis; protoheme from protoporphyrin-IX: step 1/1. In terms of biological role, catalyzes the ferrous insertion into protoporphyrin IX. This Serratia proteamaculans (strain 568) protein is Ferrochelatase.